The following is a 709-amino-acid chain: Heme/hemopexin utilization protein C (709 aa).

The signal sequence occupies residues 1–21; the sequence is MRFSKLSLAITTTLVTANALA. Residues 36–147 form the TBDR plug domain; the sequence is DPSRFTYTPQ…LGGVVAMRTP (112 aa). In terms of domain architecture, TBDR beta-barrel spans 158–709; it reads KFGVKIRQGY…NAKISAVYSF (552 aa). The TonB C-terminal box signature appears at 692-709; the sequence is SLMEGTGRNAKISAVYSF.

The protein belongs to the TonB-dependent receptor family.

It is found in the cell outer membrane. Required for utilization of free heme at low concentrations. The sequence is that of Heme/hemopexin utilization protein C (hxuC) from Haemophilus influenzae (strain 86-028NP).